The primary structure comprises 619 residues: Lysophospholipid acyltransferase (619 aa).

Residues Met1–Asp19 lie on the Lumenal side of the membrane. A helical membrane pass occupies residues Ser20–Leu39. At Lys40–Cys51 the chain is on the cytoplasmic side. The helical transmembrane segment at Cys52 to Phe72 threads the bilayer. Topologically, residues Arg73 to Lys92 are lumenal. Residues Phe93–Ala113 form a helical membrane-spanning segment. Over Gln114–Gly231 the chain is Cytoplasmic. Residue Asp146 is the Nucleophile of the active site. Residues Lys232–Met252 traverse the membrane as a helical segment. The Lumenal segment spans residues Lys253 to Arg274. The chain crosses the membrane as a helical span at residues Ile275–Ile295. The Cytoplasmic portion of the chain corresponds to Ser296–Asp429. The Nucleophile role is filled by Glu297. The active site involves His382. Residues Leu430–Leu450 traverse the membrane as a helical segment. At Asp451–Leu456 the chain is on the lumenal side. Residues Met457 to Phe477 traverse the membrane as a helical segment. Residues Arg478–Glu619 lie on the Cytoplasmic side of the membrane. Ser513 carries the post-translational modification Phosphoserine. A coiled-coil region spans residues Glu545–Ala593. Residues Asn592 to Glu619 are disordered. A phosphoserine mark is found at Ser605, Ser610, and Ser615.

This sequence belongs to the membrane-bound acyltransferase family.

The protein localises to the endoplasmic reticulum membrane. It carries out the reaction a 1-acyl-sn-glycero-3-phosphate + an acyl-CoA = a 1,2-diacyl-sn-glycero-3-phosphate + CoA. It catalyses the reaction a 1-acyl-sn-glycero-3-phosphocholine + an acyl-CoA = a 1,2-diacyl-sn-glycero-3-phosphocholine + CoA. The enzyme catalyses 1-acyl-sn-glycero-3-phospho-(1'-sn-glycerol) + an acyl-CoA = a 1,2-diacyl-sn-glycero-3-phospho-(1'-sn-glycerol) + CoA. The catalysed reaction is a 1-acyl-sn-glycero-3-phospho-(1D-myo-inositol) + an acyl-CoA = a 1,2-diacyl-sn-glycero-3-phospho-(1D-myo-inositol) + CoA. It carries out the reaction a 1-acyl-sn-glycero-3-phospho-L-serine + an acyl-CoA = a 1,2-diacyl-sn-glycero-3-phospho-L-serine + CoA. It catalyses the reaction a 1-acyl-sn-glycero-3-phosphoethanolamine + an acyl-CoA = a 1,2-diacyl-sn-glycero-3-phosphoethanolamine + CoA. The enzyme catalyses 1-(9Z-octadecenoyl)-sn-glycero-3-phosphoethanolamine + (9Z)-octadecenoyl-CoA = 1,2-di-(9Z-octadecenoyl)-sn-glycero-3-phosphoethanolamine + CoA. The catalysed reaction is 1-(9Z-octadecenoyl)-sn-glycero-3-phosphoethanolamine + (9Z)-hexadecenoyl-CoA = 1-(9Z)-octadecenoyl-2-(9Z)-hexadecenoyl-sn-glycero-3-phosphoethanolamine + CoA. It carries out the reaction 1-(9Z-octadecenoyl)-sn-glycero-3-phosphoethanolamine + hexadecanoyl-CoA = 1-(9Z-octadecenoyl)-2-hexadecanoyl-sn-glycero-3-phosphoethanolamine + CoA. It catalyses the reaction 1-(9Z-octadecenoyl)-sn-glycero-3-phosphoethanolamine + tetradecanoyl-CoA = 1-(9Z)-octadecenoyl-2-tetradecanoyl-sn-glycero-3-phosphoethanolamine + CoA. The enzyme catalyses 1-(9Z-octadecenoyl)-sn-glycero-3-phosphate + (9Z)-octadecenoyl-CoA = 1,2-di-(9Z-octadecenoyl)-sn-glycero-3-phosphate + CoA. The catalysed reaction is (9Z)-hexadecenoyl-CoA + 1-hexadecanoyl-sn-glycero-3-phosphocholine = 1-hexadecanoyl-2-(9Z-hexadecenoyl)-sn-glycero-3-phosphocholine + CoA. It carries out the reaction 1-hexadecanoyl-sn-glycero-3-phosphocholine + (9Z)-octadecenoyl-CoA = 1-hexadecanoyl-2-(9Z-octadecenoyl)-sn-glycero-3-phosphocholine + CoA. It catalyses the reaction 1-tetradecanoyl-sn-glycero-3-phosphoethanolamine + (9Z)-octadecenoyl-CoA = 1-tetradecanoyl-2-(9Z-octadecenoyl)-sn-glycero-3-phosphoethanolamine + CoA. The enzyme catalyses 1-(9Z-octadecenoyl)-sn-glycero-3-phospho-L-serine + (9Z)-octadecenoyl-CoA = 1,2-di-(9Z)-octadecenoyl-sn-glycero-3-phospho-L-serine + CoA. The catalysed reaction is a 1-acyl-sn-glycero-3-phospho-(1D-myo-inositol) + (9Z)-octadecenoyl-CoA = a 1-acyl-2-(9Z-octadecenoyl)-sn-glycero-3-phospho-(1D-myo-inositol) + CoA. Its pathway is lipid metabolism; phospholipid metabolism. In terms of biological role, broad specificity membrane-bound O-acyltransferase that mediates the incorporation of unsaturated acyl chains into the sn-2 position of various lysophospholipids. Preferentially acylates lysophosphocholine (LPC), but also lysophosphoethanolamine (LPE), lysophosphatidylglycerol (LPG), lysophosphatidic acid (LPA), lysophosphoethanolamine (LPE), lysophosphoinositol (LPI), and lysophosphoserine (LPS). Prefers an acyl residue to an alkyl residue at the sn-1 position of lysophospholipid acceptors. Accepts acyl chains in acyl-CoA from C-2 to C-20, and shows strong preference for unsaturated acyl-CoAs with 16-20 carbons. Together with SLC1, plays a central role in phosphatidic acid (PA) biosynthesis. PA is the intermediate, from which all glycerophospholipids are synthesized. Can also introduce an acyl chain at the sn-1 position of the lysophosphatidylcholine analog 1-hydroxy-2-hexadecyl-sn-glycero-3-phosphocholine (HHPC). The protein is Lysophospholipid acyltransferase of Saccharomyces cerevisiae (strain ATCC 204508 / S288c) (Baker's yeast).